Here is a 252-residue protein sequence, read N- to C-terminus: Putative peptide zinc metalloprotease protein YydH (252 aa).

2 helical membrane-spanning segments follow: residues phenylalanine 56 to isoleucine 76 and valine 85 to leucine 105. Histidine 106 serves as a coordination point for Zn(2+). Glutamate 107 is an active-site residue. Histidine 110 lines the Zn(2+) pocket. 3 helical membrane-spanning segments follow: residues isoleucine 152–isoleucine 172, alanine 181–leucine 201, and isoleucine 231–valine 251.

This sequence belongs to the peptidase M50B family. Requires Zn(2+) as cofactor.

It is found in the cell membrane. Its function is as follows. Required for production of the modified peptide YydF. May process the precursor form of YydF to release the active peptide (Potential). In Bacillus subtilis (strain 168), this protein is Putative peptide zinc metalloprotease protein YydH (yydH).